The sequence spans 121 residues: uncharacterized protein (121 aa).

Residues 11–31 (IFQFFVFPFYYFLLIITEIGF) form a helical membrane-spanning segment.

It is found in the membrane. This is an uncharacterized protein from Schizosaccharomyces pombe (strain 972 / ATCC 24843) (Fission yeast).